The sequence spans 412 residues: Multifunctional CCA protein (412 aa).

2 residues coordinate ATP: G8 and R11. Positions 8 and 11 each coordinate CTP. Positions 21 and 23 each coordinate Mg(2+). ATP-binding residues include R92, R138, and R141. The CTP site is built by R92, R138, and R141. The HD domain occupies T227–W328.

This sequence belongs to the tRNA nucleotidyltransferase/poly(A) polymerase family. Bacterial CCA-adding enzyme type 1 subfamily. As to quaternary structure, monomer. Can also form homodimers and oligomers. It depends on Mg(2+) as a cofactor. Ni(2+) is required as a cofactor.

The catalysed reaction is a tRNA precursor + 2 CTP + ATP = a tRNA with a 3' CCA end + 3 diphosphate. The enzyme catalyses a tRNA with a 3' CCA end + 2 CTP + ATP = a tRNA with a 3' CCACCA end + 3 diphosphate. Catalyzes the addition and repair of the essential 3'-terminal CCA sequence in tRNAs without using a nucleic acid template. Adds these three nucleotides in the order of C, C, and A to the tRNA nucleotide-73, using CTP and ATP as substrates and producing inorganic pyrophosphate. tRNA 3'-terminal CCA addition is required both for tRNA processing and repair. Also involved in tRNA surveillance by mediating tandem CCA addition to generate a CCACCA at the 3' terminus of unstable tRNAs. While stable tRNAs receive only 3'-terminal CCA, unstable tRNAs are marked with CCACCA and rapidly degraded. The polypeptide is Multifunctional CCA protein (Baumannia cicadellinicola subsp. Homalodisca coagulata).